A 174-amino-acid polypeptide reads, in one-letter code: Secretion monitor (174 aa).

A signal peptide spans 1–35 (MGILNLWRQFGRRYFWSHLLLGVVAASIGAPTILA).

Belongs to the SecM family.

It is found in the cytoplasm. It localises to the cytosol. The protein resides in the periplasm. Functionally, regulates secA expression by translational coupling of the secM secA operon. Translational pausing at a specific Pro residue 5 residues before the end of the protein may allow disruption of a mRNA repressor helix that normally suppresses secA translation initiation. The chain is Secretion monitor from Photorhabdus laumondii subsp. laumondii (strain DSM 15139 / CIP 105565 / TT01) (Photorhabdus luminescens subsp. laumondii).